The sequence spans 185 residues: Sarcoplasmic calcium-binding proteins II, V, VI, and VII (185 aa).

EF-hand domains are found at residues Phe5 to Val41, Ser57 to Thr92, Trp102 to Gln137, and Cys138 to Ala173. Ca(2+)-binding residues include Asp19, Asn21, Asp23, Ser25, Asp30, Asp70, Asn72, Asp74, Glu81, Asp115, Ser117, Asp119, and Glu126.

Its function is as follows. Like parvalbumins, SCPs seem to be more abundant in fast contracting muscles, but no functional relationship can be established from this distribution. The sequence is that of Sarcoplasmic calcium-binding proteins II, V, VI, and VII from Branchiostoma lanceolatum (Common lancelet).